The sequence spans 241 residues: Chaperone protein FimC (241 aa).

A signal peptide spans methionine 1 to alanine 36.

It belongs to the periplasmic pilus chaperone family.

It is found in the periplasm. In terms of biological role, required for the biogenesis of type 1 fimbriae. Binds and interact with FimH. This chain is Chaperone protein FimC (fimC), found in Escherichia coli O6:H1 (strain CFT073 / ATCC 700928 / UPEC).